Consider the following 272-residue polypeptide: 2-amino-3,7-dideoxy-D-threo-hept-6-ulosonate synthase (272 aa).

Aspartate 33 functions as the Proton acceptor in the catalytic mechanism. Residues 33–37 and 153–155 contribute to the 1-deoxy-D-threo-hexo-2,5-diulose 6-phosphate site; these read DHGVS and YPR. Catalysis depends on tyrosine 153, which acts as the Proton donor. Lysine 184 serves as the catalytic Schiff-base intermediate with substrate. 1-deoxy-D-threo-hexo-2,5-diulose 6-phosphate is bound by residues 209–210 and 237–238; these read GG and GR.

Belongs to the DeoC/FbaB aldolase family. ADHS subfamily. As to quaternary structure, homodecamer.

It catalyses the reaction 1-deoxy-D-threo-hexo-2,5-diulose 6-phosphate + L-aspartate 4-semialdehyde = 2,3-dioxopropyl phosphate + 2-amino-2,3,7-trideoxy-D-lyxo-hept-6-ulosonate. Functionally, catalyzes a transaldol reaction between 6-deoxy-5-ketofructose 1-phosphate (DKFP) and L-aspartate semialdehyde (ASA) with an elimination of hydroxypyruvaldehyde phosphate to yield 2-amino-3,7-dideoxy-D-threo-hept-6-ulosonate (ADH). Plays a key role in an alternative pathway of the biosynthesis of 3-dehydroquinate (DHQ), which is involved in the canonical pathway for the biosynthesis of aromatic amino acids. This Methanococcus vannielii (strain ATCC 35089 / DSM 1224 / JCM 13029 / OCM 148 / SB) protein is 2-amino-3,7-dideoxy-D-threo-hept-6-ulosonate synthase.